The sequence spans 624 residues: Ubiquitin carboxyl-terminal hydrolase 16 (624 aa).

The USP domain maps to 46–620 (VGLSNPANDC…EVYLLFYEIE (575 aa)). The active-site Nucleophile is the Cys55. The active-site Proton acceptor is His424. Positions 453–573 (SENPSRVASP…ATDTEASASA (121 aa)) are disordered. Low complexity predominate over residues 479 to 496 (SPPASTSTNSPLSLTPDS). The segment covering 518-544 (VSFQSTHSSSKQTISPTSAARNSSSLD) has biased composition (polar residues). The segment covering 546-573 (ARLSSPASRSSLAERNASATDTEASASA) has biased composition (low complexity).

The protein belongs to the peptidase C19 family.

It catalyses the reaction Thiol-dependent hydrolysis of ester, thioester, amide, peptide and isopeptide bonds formed by the C-terminal Gly of ubiquitin (a 76-residue protein attached to proteins as an intracellular targeting signal).. This is Ubiquitin carboxyl-terminal hydrolase 16 (ubp16) from Emericella nidulans (strain FGSC A4 / ATCC 38163 / CBS 112.46 / NRRL 194 / M139) (Aspergillus nidulans).